The following is a 280-amino-acid chain: Protoheme IX farnesyltransferase (280 aa).

9 helical membrane passes run 2-21, 30-50, 83-103, 105-125, 131-151, 160-180, 206-226, 229-249, and 260-280; these read VVAT…RAGL, AAVP…VVSG, LALW…LVGV, ATTG…YTPL, LSLP…WTSV, FLLF…ISLF, IVGY…LGVA, VYLG…VYGL, and QVFF…MIGA.

It belongs to the UbiA prenyltransferase family. Protoheme IX farnesyltransferase subfamily.

The protein localises to the cell inner membrane. The catalysed reaction is heme b + (2E,6E)-farnesyl diphosphate + H2O = Fe(II)-heme o + diphosphate. Its pathway is porphyrin-containing compound metabolism; heme O biosynthesis; heme O from protoheme: step 1/1. Its function is as follows. Converts heme B (protoheme IX) to heme O by substitution of the vinyl group on carbon 2 of heme B porphyrin ring with a hydroxyethyl farnesyl side group. This chain is Protoheme IX farnesyltransferase, found in Sorangium cellulosum (strain So ce56) (Polyangium cellulosum (strain So ce56)).